We begin with the raw amino-acid sequence, 171 residues long: UPF0398 protein SPy_1647/M5005_Spy1353 (171 aa).

It belongs to the UPF0398 family.

This Streptococcus pyogenes serotype M1 protein is UPF0398 protein SPy_1647/M5005_Spy1353.